The following is a 65-amino-acid chain: Large ribosomal subunit protein bL35c (65 aa).

A disordered region spans residues 18 to 50; sequence SSGKILRHKASKSHLLQKKSSKHRRHLSSTCQV. Over residues 22–44 the composition is skewed to basic residues; sequence ILRHKASKSHLLQKKSSKHRRHL.

It belongs to the bacterial ribosomal protein bL35 family.

The protein resides in the plastid. It localises to the chloroplast. This is Large ribosomal subunit protein bL35c from Porphyra purpurea (Red seaweed).